The following is a 451-amino-acid chain: Lipase member H (451 aa).

Residues 1 to 16 (MLRLCFLLSFMCLVKS) form the signal peptide. N-linked (GlcNAc...) asparagine glycosylation occurs at Asn66. The active-site Nucleophile is Ser154. Asp178 functions as the Charge relay system in the catalytic mechanism. A disulfide bridge connects residues Cys233 and Cys246. The active-site Charge relay system is the His248. 3 disulfides stabilise this stretch: Cys270–Cys281, Cys284–Cys292, and Cys427–Cys446.

It belongs to the AB hydrolase superfamily. Lipase family. As to quaternary structure, interacts with TTMP/C3orf52.

The protein localises to the secreted. It is found in the cell membrane. The enzyme catalyses 1-hexadecanoyl-2-(9Z-octadecenoyl)-sn-glycero-3-phosphate + H2O = 2-(9Z-octadecenoyl)-sn-glycero-3-phosphate + hexadecanoate + H(+). Functionally, hydrolyzes specifically phosphatidic acid (PA) to produce 2-acyl lysophosphatidic acid (LPA; a potent bioactive lipid mediator) and fatty acid. Does not hydrolyze other phospholipids, like phosphatidylserine (PS), phosphatidylcholine (PC) and phosphatidylethanolamine (PE) or triacylglycerol (TG). In Rattus norvegicus (Rat), this protein is Lipase member H (Liph).